A 258-amino-acid polypeptide reads, in one-letter code: Imidazole glycerol phosphate synthase subunit HisF (258 aa).

Catalysis depends on residues Asp-11 and Asp-130.

This sequence belongs to the HisA/HisF family. As to quaternary structure, heterodimer of HisH and HisF.

The protein localises to the cytoplasm. It catalyses the reaction 5-[(5-phospho-1-deoxy-D-ribulos-1-ylimino)methylamino]-1-(5-phospho-beta-D-ribosyl)imidazole-4-carboxamide + L-glutamine = D-erythro-1-(imidazol-4-yl)glycerol 3-phosphate + 5-amino-1-(5-phospho-beta-D-ribosyl)imidazole-4-carboxamide + L-glutamate + H(+). It participates in amino-acid biosynthesis; L-histidine biosynthesis; L-histidine from 5-phospho-alpha-D-ribose 1-diphosphate: step 5/9. Its function is as follows. IGPS catalyzes the conversion of PRFAR and glutamine to IGP, AICAR and glutamate. The HisF subunit catalyzes the cyclization activity that produces IGP and AICAR from PRFAR using the ammonia provided by the HisH subunit. In Citrobacter koseri (strain ATCC BAA-895 / CDC 4225-83 / SGSC4696), this protein is Imidazole glycerol phosphate synthase subunit HisF.